The following is a 185-amino-acid chain: Pericyclase pydY (185 aa).

It belongs to the pericyclase pydY family.

It participates in mycotoxin biosynthesis. Pericyclase; part of the gene cluster that mediates the biosynthesis of pyrrocidines, fungal natural products containing a macrocyclic para-cyclophane connected to a decahydrofluorene ring system that show potent antibiotic activities toward Gram-negative bacteria. Within the pathway, pydY is involved in the late Diels-Alder cycloaddition step that leads to the formation of the decahydrofluorene core. The pathway begins with the PKS-NRPS pydA which, with the help of the trans-enoyl reductase pydC, synthesizes the polyketide-tyrosyl acyl thioester product which can be reductively off-loaded by the terminal reductase (R) domain in pydA. The alpha/beta hydrolase pydG is then required to catalyze the subsequent Knoevenagel condensation that affords the 3-pyrrolin-2-one ring, whereas the four proteins pydB, pydE, pydX and pydZ then function synergistically to form the cyclophane. PydB and the membrane-bound pydX and pydZ are lipid-binding proteins that can sequester and mold the pdyG product into the inverse S-shape. Binding of the medium chain reductase pydE to the complex would trigger the cascade oxidative cyclization. PydY is involved in the Diels-Alder cycloaddition that forms the decahydrofluorene core. Additional non-enzymatic hydroxylation yields pyrrocidine A2 which can be further reduced into pyrrocidine B by an endogenous reductase. The chain is Pericyclase pydY from Acremonium sp.